The sequence spans 483 residues: Replication factor C large subunit (483 aa).

44 to 51 is an ATP binding site; sequence GSPGVGKT. Residues 415–483 are disordered; it reads AVDHGGGIFA…DGQAGLSDFM (69 aa). Residues 430–443 show a composition bias toward acidic residues; sequence AQSDTESDDDDDGD. A compositionally biased stretch (basic and acidic residues) spans 451–463; it reads DEPKEESVNREQS.

Belongs to the activator 1 small subunits family. RfcL subfamily. In terms of assembly, heteromultimer composed of small subunits (RfcS) and large subunits (RfcL).

Functionally, part of the RFC clamp loader complex which loads the PCNA sliding clamp onto DNA. The polypeptide is Replication factor C large subunit (Natronomonas pharaonis (strain ATCC 35678 / DSM 2160 / CIP 103997 / JCM 8858 / NBRC 14720 / NCIMB 2260 / Gabara) (Halobacterium pharaonis)).